A 360-amino-acid chain; its full sequence is Phenylalanine--tRNA ligase alpha subunit (360 aa).

Mg(2+) is bound at residue glutamate 260.

It belongs to the class-II aminoacyl-tRNA synthetase family. Phe-tRNA synthetase alpha subunit type 1 subfamily. Tetramer of two alpha and two beta subunits. It depends on Mg(2+) as a cofactor.

Its subcellular location is the cytoplasm. It catalyses the reaction tRNA(Phe) + L-phenylalanine + ATP = L-phenylalanyl-tRNA(Phe) + AMP + diphosphate + H(+). The protein is Phenylalanine--tRNA ligase alpha subunit of Sinorhizobium fredii (strain NBRC 101917 / NGR234).